Reading from the N-terminus, the 379-residue chain is Fucose-specific lectin g276 (379 aa).

Glutamate 126 is an alpha-L-fucose binding site. Residues glutamate 126, arginine 163, and tryptophan 185 each coordinate beta-L-fucose. Residues tryptophan 185, arginine 222, and glutamate 234 each coordinate alpha-L-fucose. Residues tryptophan 242 and glutamate 282 each contribute to the beta-L-fucose site. Residue tryptophan 289 participates in alpha-L-fucose binding.

Belongs to the fungal fucose-specific lectin family.

In terms of biological role, lectin that specifically binds to L-fucose. Is associated with the morphogenesis of the fungus, and plays a role in the formation of the constricting rings involved in nematode-trapping. The sequence is that of Fucose-specific lectin g276 from Arthrobotrys oligospora (strain ATCC 24927 / CBS 115.81 / DSM 1491) (Nematode-trapping fungus).